The chain runs to 911 residues: Protein dead ringer (911 aa).

Disordered stretches follow at residues 1–44 (MQLR…DCDS), 67–87 (SGGG…LSHH), and 172–274 (HVTS…QNNG). Over residues 19–34 (IERDSDLGDDLSHGDR) the composition is skewed to basic and acidic residues. A Phosphoserine modification is found at serine 30. Threonine 35 is subject to Phosphothreonine. Serine 44 carries the post-translational modification Phosphoserine. Residues 174–201 (TSSPSGGNGSSYNGGTTPTNSSNSNATT) are compositionally biased toward low complexity. Gly residues predominate over residues 202 to 231 (NGGGTAGPGGTGGSGGGGGGGGGGGGGVGG). A compositionally biased stretch (low complexity) spans 252–273 (AANSASNSSTSSEASNSSQQNN). The region spanning 293 to 385 (DPKRKEFLDD…YLYPYECEKK (93 aa)) is the ARID domain. Disordered regions lie at residues 501-633 (GMPP…VGSG), 662-775 (PSMG…GKLN), and 826-877 (QSET…DQDM). Residues 512–550 (HQQQHSQQQQQQQHHHQQQQQQQSQQQHHLQQQRQRSQS) show a composition bias toward low complexity. Over residues 570–600 (HNNNSPPGSAHTSPQQREALNLSDSPPNLTN) the composition is skewed to polar residues. Residues serine 592 and serine 594 each carry the phosphoserine modification. Residues 601–621 (IKREREREPTPEPVDQDDKFV) show a composition bias toward basic and acidic residues. A Phosphoserine modification is found at serine 720. The REKLES domain occupies 731–825 (TTGGSVGHRH…GVLVANVPLS (95 aa)). A compositionally biased stretch (basic residues) spans 737–751 (GHRHSSPVSTKKKGG). The span at 841–853 (TVEEEKDEEEEEE) shows a compositional bias: acidic residues. Residues 854 to 870 (PKAAEEESHRSPVKQEN) are compositionally biased toward basic and acidic residues.

Present in the pharyngeal muscles, hindgut epithelium, amnioserosa, ring gland, midgut-hindgut junction, posterior region of each brain lobe, longitudinal glial cells of the CNS and the salivary gland duct of germ-band retracted embryos.

It localises to the nucleus. Transcription factor which is a downstream target of gcm and repo. Directly or indirectly activates the transcription of locos and pros, which are essential for the development of some glial cells. Plays an essential role in defining the cell shape and migration characteristics of longitudinal glia that enable them to establish a normal axon scaffold. This chain is Protein dead ringer (retn), found in Drosophila melanogaster (Fruit fly).